Reading from the N-terminus, the 564-residue chain is 4-hydroxybutyrate--CoA ligase 1 (564 aa).

A helical transmembrane segment spans residues 105-125 (VHPMHWAVFLAVIKGGFVMVP). Residues 204–212 (TSGTTGMPK), 343–348 (DFYGQT), D429, and R444 contribute to the ATP site. T348 contacts substrate. A CoA-binding site is contributed by 452-454 (SDY). R455 contributes to the substrate binding site. Residues R484, K513, and 521-523 (VPR) contribute to the CoA site. K538 provides a ligand contact to ATP.

The protein belongs to the ATP-dependent AMP-binding enzyme family. Mg(2+) is required as a cofactor. Mn(2+) serves as cofactor.

It localises to the membrane. It catalyses the reaction 4-hydroxybutanoate + ATP + CoA = 4-hydroxybutanoyl-CoA + AMP + diphosphate. The catalysed reaction is acetate + ATP + CoA = acetyl-CoA + AMP + diphosphate. It carries out the reaction propanoate + ATP + CoA = propanoyl-CoA + AMP + diphosphate. The enzyme catalyses a medium-chain fatty acid + ATP + CoA = a medium-chain fatty acyl-CoA + AMP + diphosphate. Its function is as follows. Involved in the 3-hydroxypropionate/4-hydroxybutyrate cycle which incorporates carbon dioxide into cellular carbon. Catalyzes the ligation of coenzyme A (CoA) to 4-hydroxybutyrate (4HB). It can also use butyrate, valerate, propionate, acetate and 3-hydroxybutyrate (3HB) as substrates. This Metallosphaera sedula (strain ATCC 51363 / DSM 5348 / JCM 9185 / NBRC 15509 / TH2) protein is 4-hydroxybutyrate--CoA ligase 1.